A 153-amino-acid polypeptide reads, in one-letter code: Small ribosomal subunit protein eS19 (153 aa).

Belongs to the eukaryotic ribosomal protein eS19 family. In terms of assembly, part of the 30S ribosomal subunit.

Its function is as follows. May be involved in maturation of the 30S ribosomal subunit. The polypeptide is Small ribosomal subunit protein eS19 (Aeropyrum pernix (strain ATCC 700893 / DSM 11879 / JCM 9820 / NBRC 100138 / K1)).